The primary structure comprises 300 residues: Putative glycosyltransferase ORF300 (300 aa).

It belongs to the glycosyltransferase group 1 family. Glycosyltransferase 4 subfamily.

This Acidianus hospitalis (AFV-1) protein is Putative glycosyltransferase ORF300.